A 301-amino-acid chain; its full sequence is Mitochondrial ornithine transporter 1 (301 aa).

6 consecutive transmembrane segments (helical) span residues 5–25, 68–88, 110–130, 168–188, 207–227, and 237–257; these read PAIQ…ACVL, SPAL…YGFC, AAAG…TELV, GFYH…FFFF, LGPI…WLAV, and IQVL…LSIV. Solcar repeat units follow at residues 7–91, 104–197, and 207–293; these read IQAA…CQQV, LSDL…SRSF, and LGPI…SRKL.

It belongs to the mitochondrial carrier (TC 2.A.29) family. Expressed in the liver (at protein level).

Its subcellular location is the mitochondrion inner membrane. It localises to the mitochondrion membrane. It carries out the reaction L-citrulline(in) + L-ornithine(out) + H(+)(in) = L-citrulline(out) + L-ornithine(in) + H(+)(out). The enzyme catalyses L-ornithine(in) + L-arginine(out) = L-ornithine(out) + L-arginine(in). The catalysed reaction is L-ornithine(out) + L-lysine(in) = L-ornithine(in) + L-lysine(out). It catalyses the reaction L-ornithine(out) + H(+)(in) = L-ornithine(in) + H(+)(out). It carries out the reaction L-lysine(out) + H(+)(in) = L-lysine(in) + H(+)(out). Its activity is regulated as follows. Inhibited by pyridoxal 5'-phosphate as well as by mercurials (mersalyl, p-chloromercuribenzene sulfonate, and mercuric chloride), N-ethylmaleimide and spermine. In terms of biological role, mitochondrial ornithine-citrulline antiporter. Catalyzes the exchange between cytosolic ornithine and mitochondrial citrulline plus an H(+), the proton compensates the positive charge of ornithine thus leading to an electroneutral transport. Plays a crucial role in the urea cycle, by connecting the cytosolic and the intramitochondrial reactions of the urea cycle. Lysine and arginine are also transported by the antiport mechanism. In addition, catalyzes an electroneutral exchange of ornithine or lysine for H(+), a reaction driven by the pH gradient across the inner membrane. The polypeptide is Mitochondrial ornithine transporter 1 (Slc25a15) (Rattus norvegicus (Rat)).